A 534-amino-acid chain; its full sequence is Alkaline serine exoprotease A (534 aa).

The N-terminal stretch at M1–A21 is a signal peptide. Residues F22–D141 constitute a propeptide that is removed on maturation. The 78-residue stretch at R57–L134 folds into the Inhibitor I9 domain. One can recognise a Peptidase S8 domain in the interval I148–D419. Active-site charge relay system residues include D180, H213, and S363. The interval D423–P442 is disordered.

Belongs to the peptidase S8 family.

The protein is Alkaline serine exoprotease A (proA) of Vibrio alginolyticus.